The sequence spans 299 residues: MTESNRLRIAIQKSGRLSTDSQQLLKSCGVKFSINEQRLIAHADNMPIDLLRVRDDDIPGLVMDGVVDMGIIGENVLEEEQIERQTLNKPADCLKLRQLDFGSCRLSLAVPTEFSYADASSLEGLRIATSYPNLLRRFMQQKGITYRDCMLKGSVEVAPRAGLADGICDLVSTGATLEANGLYETEVIYRSMACIIQSTQTQTPTKQALIDKILSRVNGVIRARESKYILLHAPTETLDQIVALLPGAENPTVLPLNDDTNRVAIHAVSTEDLFWDTMEQLTALGASSILVMPIEKMMG.

It belongs to the ATP phosphoribosyltransferase family. Long subfamily. Mg(2+) serves as cofactor.

The protein localises to the cytoplasm. The catalysed reaction is 1-(5-phospho-beta-D-ribosyl)-ATP + diphosphate = 5-phospho-alpha-D-ribose 1-diphosphate + ATP. It functions in the pathway amino-acid biosynthesis; L-histidine biosynthesis; L-histidine from 5-phospho-alpha-D-ribose 1-diphosphate: step 1/9. Feedback inhibited by histidine. Its function is as follows. Catalyzes the condensation of ATP and 5-phosphoribose 1-diphosphate to form N'-(5'-phosphoribosyl)-ATP (PR-ATP). Has a crucial role in the pathway because the rate of histidine biosynthesis seems to be controlled primarily by regulation of HisG enzymatic activity. This is ATP phosphoribosyltransferase from Shewanella baltica (strain OS155 / ATCC BAA-1091).